The chain runs to 194 residues: Peptidyl-tRNA hydrolase (194 aa).

Y16 serves as a coordination point for tRNA. Residue H21 is the Proton acceptor of the active site. The tRNA site is built by F67, N69, and N115.

It belongs to the PTH family. In terms of assembly, monomer.

The protein localises to the cytoplasm. The enzyme catalyses an N-acyl-L-alpha-aminoacyl-tRNA + H2O = an N-acyl-L-amino acid + a tRNA + H(+). In terms of biological role, hydrolyzes ribosome-free peptidyl-tRNAs (with 1 or more amino acids incorporated), which drop off the ribosome during protein synthesis, or as a result of ribosome stalling. Its function is as follows. Catalyzes the release of premature peptidyl moieties from peptidyl-tRNA molecules trapped in stalled 50S ribosomal subunits, and thus maintains levels of free tRNAs and 50S ribosomes. In Shigella boydii serotype 18 (strain CDC 3083-94 / BS512), this protein is Peptidyl-tRNA hydrolase.